The sequence spans 414 residues: tRNA N6-adenosine threonylcarbamoyltransferase, mitochondrial (414 aa).

The N-terminal 29 residues, 1–29 (MLMLSKTAGAIPRPPRSNVRGFIRRFNVQ), are a transit peptide targeting the mitochondrion. N6-acetyllysine is present on residues lysine 74 and lysine 140. The a divalent metal cation site is built by histidine 147 and histidine 151. Substrate is bound by residues 169 to 173 (LISGG) and aspartate 202. Residue lysine 203 is modified to N6-acetyllysine. Glycine 222 and glutamate 226 together coordinate substrate. N6-acetyllysine occurs at positions 230 and 299. Substrate contacts are provided by residues 329–330 (SN) and threonine 357. Aspartate 358 provides a ligand contact to a divalent metal cation.

Belongs to the KAE1 / TsaD family. In terms of assembly, monomer. Requires a divalent metal cation as cofactor.

The protein resides in the mitochondrion. The enzyme catalyses L-threonylcarbamoyladenylate + adenosine(37) in tRNA = N(6)-L-threonylcarbamoyladenosine(37) in tRNA + AMP + H(+). In terms of biological role, required for the formation of a threonylcarbamoyl group on adenosine at position 37 (t(6)A37) in mitochondrial tRNAs that read codons beginning with adenine. Probably involved in the transfer of the threonylcarbamoyl moiety of threonylcarbamoyl-AMP (TC-AMP) to the N6 group of A37. Involved in mitochondrial genome maintenance. In Rattus norvegicus (Rat), this protein is tRNA N6-adenosine threonylcarbamoyltransferase, mitochondrial.